A 38-amino-acid polypeptide reads, in one-letter code: Large ribosomal subunit protein bL36c (38 aa).

Belongs to the bacterial ribosomal protein bL36 family.

The protein localises to the plastid. It localises to the apicoplast. This is Large ribosomal subunit protein bL36c (rpl36) from Theileria parva (East coast fever infection agent).